Consider the following 428-residue polypeptide: Glucose-1-phosphate adenylyltransferase (428 aa).

Alpha-D-glucose 1-phosphate is bound by residues Tyr114, Gly179, 194 to 195 (EK), and Ser212.

The protein belongs to the bacterial/plant glucose-1-phosphate adenylyltransferase family. Homotetramer.

It carries out the reaction alpha-D-glucose 1-phosphate + ATP + H(+) = ADP-alpha-D-glucose + diphosphate. It functions in the pathway glycan biosynthesis; glycogen biosynthesis. Its function is as follows. Involved in the biosynthesis of ADP-glucose, a building block required for the elongation reactions to produce glycogen. Catalyzes the reaction between ATP and alpha-D-glucose 1-phosphate (G1P) to produce pyrophosphate and ADP-Glc. This is Glucose-1-phosphate adenylyltransferase from Yersinia pseudotuberculosis serotype O:1b (strain IP 31758).